The primary structure comprises 72 residues: Large ribosomal subunit protein bL31c (72 aa).

Belongs to the bacterial ribosomal protein bL31 family. Type A subfamily. As to quaternary structure, part of the 50S ribosomal subunit.

Its subcellular location is the plastid. It is found in the chloroplast. Functionally, binds the 23S rRNA. This Trieres chinensis (Marine centric diatom) protein is Large ribosomal subunit protein bL31c.